The chain runs to 746 residues: Lysine-specific histone demethylase 1 homolog 2 (746 aa).

A disordered region spans residues 1-26 (MNSPASDETAPRRNRRKVSRKNYDEN). Positions 51 to 152 (EKETETEALI…FGVSPLFAPY (102 aa)) constitute an SWIRM domain. FAD-binding residues include Glu-189, Arg-191, Arg-197, and Glu-569.

Belongs to the flavin monoamine oxidase family. FAD serves as cofactor. Expressed in the shoot and root apical regions of young seedlings. Expressed in inflorescences.

Probable histone demethylase that reduces the levels of histone H3 'Lys-4' methylation in chromatin of the floral repressor FLOWERING LOCUS C (FLC) and the sporophytically silenced floral repressor FWA. Seems to act in partial redundancy with FLOWERING LOCUS D (FLD) to repress FLC expression. Required for cytosine methylation of FWA. Controls primary seed dormancy by regulating DOG1 and abscisic acid signaling-related genes. This chain is Lysine-specific histone demethylase 1 homolog 2, found in Arabidopsis thaliana (Mouse-ear cress).